A 443-amino-acid polypeptide reads, in one-letter code: GTPase Der (443 aa).

EngA-type G domains lie at 3–167 (PVIA…PEEK) and 176–349 (IKIA…QSIQ). GTP contacts are provided by residues 9–16 (GRPNVGKS), 56–60 (DTGGL), 119–122 (NKAD), 182–189 (GRPNVGKS), 229–233 (DTAGI), and 294–297 (NKWD). One can recognise a KH-like domain in the interval 350-434 (QELTTGQLTR…PVHIKLKTDP (85 aa)).

This sequence belongs to the TRAFAC class TrmE-Era-EngA-EngB-Septin-like GTPase superfamily. EngA (Der) GTPase family. Associates with the 50S ribosomal subunit.

GTPase that plays an essential role in the late steps of ribosome biogenesis. The chain is GTPase Der from Coxiella burnetii (strain CbuG_Q212) (Coxiella burnetii (strain Q212)).